The chain runs to 245 residues: Fibroblast growth factor 13 (245 aa).

Disordered stretches follow at residues 1-37 (MAAA…SKGN) and 213-245 (TEFS…NDST). The mediates targeting to the nucleus stretch occupies residues 1-62 (MAAAIASSLI…GSKKRRRRRP (62 aa)). A compositionally biased stretch (polar residues) spans 215-245 (FSRSGSGTPTKSRSVSGVLNGGKSMSQNDST).

This sequence belongs to the heparin-binding growth factors family.

It is found in the cell projection. The protein resides in the filopodium. The protein localises to the growth cone. It localises to the dendrite. Its subcellular location is the cell membrane. It is found in the sarcolemma. The protein resides in the cytoplasm. Functionally, microtubule-binding protein which directly binds tubulin and is involved in both polymerization and stabilization of microtubules. Through its action on microtubules, may participate in the refinement of axons by negatively regulating axonal and leading processes branching. Plays a crucial role in neuron polarization and migration. Regulates voltage-gated sodium channel transport and function. Required for proper head development, it is involved in neural differentiation through regulation of the mek5-erk5 pathway. This is Fibroblast growth factor 13 (fgf13) from Xenopus laevis (African clawed frog).